The following is a 234-amino-acid chain: Orotidine 5'-phosphate decarboxylase (234 aa).

Substrate-binding positions include Asp-14, Lys-36, 63-72 (DLKFHDIPNT), Thr-123, Arg-184, Gln-193, Gly-213, and Arg-214. Residue Lys-65 is the Proton donor of the active site.

This sequence belongs to the OMP decarboxylase family. Type 1 subfamily. Homodimer.

The catalysed reaction is orotidine 5'-phosphate + H(+) = UMP + CO2. It participates in pyrimidine metabolism; UMP biosynthesis via de novo pathway; UMP from orotate: step 2/2. In terms of biological role, catalyzes the decarboxylation of orotidine 5'-monophosphate (OMP) to uridine 5'-monophosphate (UMP). The polypeptide is Orotidine 5'-phosphate decarboxylase (Pseudoalteromonas translucida (strain TAC 125)).